A 461-amino-acid chain; its full sequence is Probable metabolite transport protein CsbC (461 aa).

The Cytoplasmic segment spans residues M1–G14. A helical transmembrane segment spans residues A15–I35. The Extracellular segment spans residues N36–D38. The helical transmembrane segment at I39 to F59 threads the bilayer. At G60–V76 the chain is on the cytoplasmic side. A helical membrane pass occupies residues V77–I97. Over G98–R104 the chain is Extracellular. The helical transmembrane segment at V105–M125 threads the bilayer. The Cytoplasmic segment spans residues A126 to N139. The helical transmembrane segment at L140 to E160 threads the bilayer. Topologically, residues A161 to R163 are extracellular. Residues W164 to P184 form a helical membrane-spanning segment. The Cytoplasmic segment spans residues E185–P241. The chain crosses the membrane as a helical span at residues M242–I262. Over Y263–A280 the chain is Extracellular. A helical membrane pass occupies residues L281–I301. The Cytoplasmic portion of the chain corresponds to D302–K308. A helical membrane pass occupies residues L309–L329. Residues T330–T341 are Extracellular-facing. A helical transmembrane segment spans residues V342–V362. Residues L363–G378 are Cytoplasmic-facing. Residues F379–L399 traverse the membrane as a helical segment. Over S400–M402 the chain is Extracellular. Residues G403–F423 traverse the membrane as a helical segment. Residues Y424–L461 are Cytoplasmic-facing.

The protein belongs to the major facilitator superfamily. Sugar transporter (TC 2.A.1.1) family.

The protein resides in the cell membrane. Its function is as follows. Could serve either a nutritional or an osmotic protection function. The sequence is that of Probable metabolite transport protein CsbC (csbC) from Bacillus subtilis (strain 168).